The following is a 273-amino-acid chain: Proteasome subunit beta type-10 (273 aa).

Methionine 1 is modified (N-acetylmethionine). Residues 1 to 39 (MLKPALEPRGGFSFENCQRNASLERVLPGLKVPHARKTG) constitute a propeptide, removed in mature form. Threonine 40 (nucleophile) is an active-site residue. At serine 230 the chain carries Phosphoserine.

The protein belongs to the peptidase T1B family. The 26S proteasome consists of a 20S proteasome core and two 19S regulatory subunits. The 20S proteasome core is composed of 28 subunits that are arranged in four stacked rings, resulting in a barrel-shaped structure. The two end rings are each formed by seven alpha subunits, and the two central rings are each formed by seven beta subunits. The catalytic chamber with the active sites is on the inside of the barrel. Component of the immunoproteasome, where it displaces the equivalent housekeeping subunit PSMB7. Component of the spermatoproteasome, a form of the proteasome specifically found in testis. As to quaternary structure, (Microbial infection) Interacts with HIV-1 TAT protein. Post-translationally, autocleaved. The resulting N-terminal Thr residue of the mature subunit is responsible for the nucleophile proteolytic activity.

The protein localises to the cytoplasm. The protein resides in the nucleus. It carries out the reaction Cleavage of peptide bonds with very broad specificity.. Its function is as follows. The proteasome is a multicatalytic proteinase complex which is characterized by its ability to cleave peptides with Arg, Phe, Tyr, Leu, and Glu adjacent to the leaving group at neutral or slightly basic pH. The proteasome has an ATP-dependent proteolytic activity. This subunit is involved in antigen processing to generate class I binding peptides. This chain is Proteasome subunit beta type-10 (PSMB10), found in Homo sapiens (Human).